Here is a 348-residue protein sequence, read N- to C-terminus: Protein RecA (348 aa).

64–71 is an ATP binding site; that stretch reads GPESSGKT. Residues 326–335 show a composition bias toward basic and acidic residues; it reads EIDGTNKEPL. Positions 326 to 348 are disordered; sequence EIDGTNKEPLDENEETLSLLDDE. Positions 336-348 are enriched in acidic residues; it reads DENEETLSLLDDE.

Belongs to the RecA family.

It is found in the cytoplasm. In terms of biological role, can catalyze the hydrolysis of ATP in the presence of single-stranded DNA, the ATP-dependent uptake of single-stranded DNA by duplex DNA, and the ATP-dependent hybridization of homologous single-stranded DNAs. It interacts with LexA causing its activation and leading to its autocatalytic cleavage. This is Protein RecA from Listeria innocua serovar 6a (strain ATCC BAA-680 / CLIP 11262).